Reading from the N-terminus, the 475-residue chain is Ankyrin repeat, SAM and basic leucine zipper domain-containing protein 1 (475 aa).

The tract at residues 1 to 25 is disordered; it reads MAAGALRGLPVAGGGESSESEDDGW. 3 positions are modified to phosphoserine: Ser17, Ser18, and Ser20. ANK repeat units follow at residues 45 to 74, 78 to 107, 110 to 144, 148 to 177, 181 to 210, and 214 to 243; these read EKKE…SVDS, YGWT…NASF, DKQS…DPNV, RLMT…EVNT, NGYT…NKML, and DGKM…PLEG. In terms of domain architecture, SAM spans 272–334; the sequence is SYTAFGDLEV…KILAALKELQ (63 aa).

Interacts with DDX4, PIWIL1, RANBP9 and TDRD1.

It localises to the cytoplasm. Its function is as follows. Plays a central role during spermatogenesis by repressing transposable elements and preventing their mobilization, which is essential for the germline integrity. Acts via the piRNA metabolic process, which mediates the repression of transposable elements during meiosis by forming complexes composed of piRNAs and Piwi proteins and governs the methylation and subsequent repression of transposons. Its association with pi-bodies suggests a participation in the primary piRNAs metabolic process. Required prior to the pachytene stage to facilitate the production of multiple types of piRNAs, including those associated with repeats involved in the regulation of retrotransposons. May act by mediating protein-protein interactions during germ cell maturation. This chain is Ankyrin repeat, SAM and basic leucine zipper domain-containing protein 1 (ASZ1), found in Pongo abelii (Sumatran orangutan).